A 660-amino-acid chain; its full sequence is Bifunctional polymyxin resistance protein ArnA (660 aa).

A formyltransferase ArnAFT region spans residues 1–304 (MKTVVFAYHD…TLGLVQGSRL (304 aa)). 86-88 (HLI) is a binding site for (6R)-10-formyltetrahydrofolate. The active-site Proton donor; for formyltransferase activity is His104. (6R)-10-formyltetrahydrofolate-binding positions include Arg114 and 136–140 (VKRAD). Residues 314 to 660 (RRTRVLILGV…RTVDLTDKPS (347 aa)) form a dehydrogenase ArnADH region. NAD(+) contacts are provided by residues Asp347 and 368-369 (DI). UDP-alpha-D-glucuronate is bound by residues Ala393, Tyr398, and 432–433 (TS). Glu434 acts as the Proton acceptor; for decarboxylase activity in catalysis. Residues Arg460, Asn492, 526-535 (KLIDGGKQKR), and Tyr613 each bind UDP-alpha-D-glucuronate. Arg619 serves as the catalytic Proton donor; for decarboxylase activity.

It in the N-terminal section; belongs to the Fmt family. UDP-L-Ara4N formyltransferase subfamily. In the C-terminal section; belongs to the NAD(P)-dependent epimerase/dehydratase family. UDP-glucuronic acid decarboxylase subfamily. Homohexamer, formed by a dimer of trimers.

The enzyme catalyses UDP-alpha-D-glucuronate + NAD(+) = UDP-beta-L-threo-pentopyranos-4-ulose + CO2 + NADH. The catalysed reaction is UDP-4-amino-4-deoxy-beta-L-arabinose + (6R)-10-formyltetrahydrofolate = UDP-4-deoxy-4-formamido-beta-L-arabinose + (6S)-5,6,7,8-tetrahydrofolate + H(+). It participates in nucleotide-sugar biosynthesis; UDP-4-deoxy-4-formamido-beta-L-arabinose biosynthesis; UDP-4-deoxy-4-formamido-beta-L-arabinose from UDP-alpha-D-glucuronate: step 1/3. Its pathway is nucleotide-sugar biosynthesis; UDP-4-deoxy-4-formamido-beta-L-arabinose biosynthesis; UDP-4-deoxy-4-formamido-beta-L-arabinose from UDP-alpha-D-glucuronate: step 3/3. The protein operates within bacterial outer membrane biogenesis; lipopolysaccharide biosynthesis. Functionally, bifunctional enzyme that catalyzes the oxidative decarboxylation of UDP-glucuronic acid (UDP-GlcUA) to UDP-4-keto-arabinose (UDP-Ara4O) and the addition of a formyl group to UDP-4-amino-4-deoxy-L-arabinose (UDP-L-Ara4N) to form UDP-L-4-formamido-arabinose (UDP-L-Ara4FN). The modified arabinose is attached to lipid A and is required for resistance to polymyxin and cationic antimicrobial peptides. The sequence is that of Bifunctional polymyxin resistance protein ArnA from Escherichia coli O17:K52:H18 (strain UMN026 / ExPEC).